We begin with the raw amino-acid sequence, 269 residues long: GRF-interacting factor 10 (269 aa).

The segment at 1–71 (MTAEGEAKNP…GEKDDGACRD (71 aa)) is disordered. Over residues 22–43 (QQAAPAPAPAQGEVAQEAAVQG) the composition is skewed to low complexity. Basic and acidic residues predominate over residues 47–69 (EQERDKADREVQGGAGEKDDGAC). Residues 113–148 (AFTAMQLQELEQQSRVYQYMAARVPVPTHLVFPVWK) form the QLQ domain. One can recognise a WRC domain in the interval 179–223 (EPEPGRCRRTDGKKWRCWRNTIPNEKYCERHMHRGRKRPVQVFLE). 2 short sequence motifs (bipartite nuclear localization signal) span residues 184-194 (RCRRTDGKKWR) and 212-216 (RGRKR). A disordered region spans residues 217 to 269 (PVQVFLEDDEPDSASGSKPAAPGKATEGAKKADDKSPSSKKLAVAAPAAVQST). The segment covering 243 to 253 (EGAKKADDKSP) has biased composition (basic and acidic residues).

This sequence belongs to the GRF family. As to quaternary structure, interacts with GIF1. Highly expressed in shoots. Expressed in developing leaves.

The protein resides in the nucleus. Its function is as follows. Involved in the regulation of cell proliferation in developing shoots and leaves. Does not possess transactivation activity. The sequence is that of GRF-interacting factor 10 from Zea mays (Maize).